The primary structure comprises 1085 residues: RecBCD enzyme subunit RecC (1085 aa).

It belongs to the RecC family. As to quaternary structure, heterotrimer of RecB, RecC and RecD. All subunits contribute to DNA-binding.

Functionally, a helicase/nuclease that prepares dsDNA breaks (DSB) for recombinational DNA repair. Binds to DSBs and unwinds DNA via a highly rapid and processive ATP-dependent bidirectional helicase activity. Holoenzyme degrades any linearized DNA that is unable to undergo homologous recombination. In the holoenzyme this subunit recognizes the wild-type Chi sequence, and when added to isolated RecB increases its ATP-dependent helicase processivity. Unlike the case in E.coli, suppresses RecA-dependent homologous recombination, is instead required for single-strand annealing pathway repair of DSB. The protein is RecBCD enzyme subunit RecC of Mycolicibacterium smegmatis (strain ATCC 700084 / mc(2)155) (Mycobacterium smegmatis).